A 441-amino-acid chain; its full sequence is Tubulin beta chain, nucleomorph (441 aa).

Gln11, Glu69, Ser138, Gly142, Thr143, Gly144, Asn204, and Asn226 together coordinate GTP. Glu69 is a Mg(2+) binding site.

This sequence belongs to the tubulin family. As to quaternary structure, dimer of alpha and beta chains. A typical microtubule is a hollow water-filled tube with an outer diameter of 25 nm and an inner diameter of 15 nM. Alpha-beta heterodimers associate head-to-tail to form protofilaments running lengthwise along the microtubule wall with the beta-tubulin subunit facing the microtubule plus end conferring a structural polarity. Microtubules usually have 13 protofilaments but different protofilament numbers can be found in some organisms and specialized cells. Mg(2+) is required as a cofactor.

Functionally, tubulin is the major constituent of microtubules, a cylinder consisting of laterally associated linear protofilaments composed of alpha- and beta-tubulin heterodimers. Microtubules grow by the addition of GTP-tubulin dimers to the microtubule end, where a stabilizing cap forms. Below the cap, tubulin dimers are in GDP-bound state, owing to GTPase activity of alpha-tubulin. The sequence is that of Tubulin beta chain, nucleomorph (tubB) from Guillardia theta (Cryptophyte).